The chain runs to 380 residues: Cytochrome b (380 aa).

Transmembrane regions (helical) follow at residues 34–54 (FGSLLGICLMTQILTGLLLAM), 78–99 (WLIRNLHANGASLFFICIYLHI), 114–134 (WNTGVILLLTLMATAFVGYVL), and 179–199 (FFALHFLLPFIIAGLTLIHLT). 2 residues coordinate heme b: histidine 84 and histidine 98. Histidine 183 and histidine 197 together coordinate heme b. A ubiquinone is bound at residue histidine 202. Transmembrane regions (helical) follow at residues 227–247 (TKDILGFIILLLPLMTLAMFA), 289–309 (LGGVLALAASVLVLFLAPFLH), 321–341 (LSQLLFWTLVANLFILTWIGS), and 348–368 (FIITGQLASLTYFTILLILFP).

Belongs to the cytochrome b family. In terms of assembly, the cytochrome bc1 complex contains 11 subunits: 3 respiratory subunits (MT-CYB, CYC1 and UQCRFS1), 2 core proteins (UQCRC1 and UQCRC2) and 6 low-molecular weight proteins (UQCRH/QCR6, UQCRB/QCR7, UQCRQ/QCR8, UQCR10/QCR9, UQCR11/QCR10 and a cleavage product of UQCRFS1). This cytochrome bc1 complex then forms a dimer. The cofactor is heme b.

Its subcellular location is the mitochondrion inner membrane. In terms of biological role, component of the ubiquinol-cytochrome c reductase complex (complex III or cytochrome b-c1 complex) that is part of the mitochondrial respiratory chain. The b-c1 complex mediates electron transfer from ubiquinol to cytochrome c. Contributes to the generation of a proton gradient across the mitochondrial membrane that is then used for ATP synthesis. This is Cytochrome b (MT-CYB) from Aphanotriccus audax (Black-billed flycatcher).